Here is a 297-residue protein sequence, read N- to C-terminus: Homoserine kinase (297 aa).

79–89 (PIARGLGSSGA) contacts ATP.

Belongs to the GHMP kinase family. Homoserine kinase subfamily.

It is found in the cytoplasm. It catalyses the reaction L-homoserine + ATP = O-phospho-L-homoserine + ADP + H(+). Its pathway is amino-acid biosynthesis; L-threonine biosynthesis; L-threonine from L-aspartate: step 4/5. Functionally, catalyzes the ATP-dependent phosphorylation of L-homoserine to L-homoserine phosphate. This is Homoserine kinase from Pyrobaculum neutrophilum (strain DSM 2338 / JCM 9278 / NBRC 100436 / V24Sta) (Thermoproteus neutrophilus).